We begin with the raw amino-acid sequence, 494 residues long: Tyrosinase (494 aa).

Residues His38, His53, Cys64, His224, His228, and His256 each coordinate Cu cation.

Belongs to the tyrosinase family. The cofactor is Cu(2+).

The catalysed reaction is 2 L-dopa + O2 = 2 L-dopaquinone + 2 H2O. It carries out the reaction L-tyrosine + O2 = L-dopaquinone + H2O. The sequence is that of Tyrosinase (mepA) from Rhizobium meliloti (Ensifer meliloti).